Reading from the N-terminus, the 126-residue chain is Large ribosomal subunit protein bL20 (126 aa).

Belongs to the bacterial ribosomal protein bL20 family.

In terms of biological role, binds directly to 23S ribosomal RNA and is necessary for the in vitro assembly process of the 50S ribosomal subunit. It is not involved in the protein synthesizing functions of that subunit. The protein is Large ribosomal subunit protein bL20 of Frankia casuarinae (strain DSM 45818 / CECT 9043 / HFP020203 / CcI3).